The chain runs to 350 residues: Sodium/calcium exchanger MaX1 (350 aa).

A run of 10 helical transmembrane segments spans residues valine 4 to valine 24, phenylalanine 39 to isoleucine 59, isoleucine 69 to alanine 89, methionine 101 to phenylalanine 121, leucine 125 to phenylalanine 145, glycine 202 to alanine 222, valine 242 to alanine 264, valine 276 to proline 296, methionine 302 to isoleucine 322, and arginine 330 to isoleucine 350.

It belongs to the Ca(2+):cation antiporter (CaCA) (TC 2.A.19) family.

It localises to the cell membrane. Its activity is regulated as follows. Calcium transport is inhibited by Na(+), K(+), Li(+), Mg(2+) or Mn(2+). Its function is as follows. Catalyzes Na(+)/Ca(2+) exchange. The transport is electrogenic with a likely stoichiometry of 3 or more Na(+) for each Ca(2+). Is K(+)-independent. The protein is Sodium/calcium exchanger MaX1 (maX1) of Methanosarcina acetivorans (strain ATCC 35395 / DSM 2834 / JCM 12185 / C2A).